Reading from the N-terminus, the 295-residue chain is Probable lipid kinase YegS-like (295 aa).

One can recognise a DAGKc domain in the interval 1-129 (MQGRKAMLVL…IDLGQAGDQL (129 aa)). Residues Thr39, 65 to 71 (GDGTLRD), and Thr92 each bind ATP. Mg(2+)-binding residues include Met210, Asp213, and Leu215. Glu264 serves as the catalytic Proton acceptor.

This sequence belongs to the diacylglycerol/lipid kinase family. YegS lipid kinase subfamily. Requires Mg(2+) as cofactor. It depends on Ca(2+) as a cofactor.

The protein localises to the cytoplasm. Its function is as follows. Probably phosphorylates lipids; the in vivo substrate is unknown. This chain is Probable lipid kinase YegS-like, found in Pseudomonas putida (strain ATCC 47054 / DSM 6125 / CFBP 8728 / NCIMB 11950 / KT2440).